The following is a 300-amino-acid chain: UPF0282 protein TGAM_0379 (300 aa).

It belongs to the UPF0282 family.

This chain is UPF0282 protein TGAM_0379, found in Thermococcus gammatolerans (strain DSM 15229 / JCM 11827 / EJ3).